A 196-amino-acid chain; its full sequence is ATP-dependent Clp protease proteolytic subunit (196 aa).

Serine 96 functions as the Nucleophile in the catalytic mechanism. Histidine 121 is an active-site residue.

Belongs to the peptidase S14 family. As to quaternary structure, fourteen ClpP subunits assemble into 2 heptameric rings which stack back to back to give a disk-like structure with a central cavity, resembling the structure of eukaryotic proteasomes.

The protein localises to the cytoplasm. It catalyses the reaction Hydrolysis of proteins to small peptides in the presence of ATP and magnesium. alpha-casein is the usual test substrate. In the absence of ATP, only oligopeptides shorter than five residues are hydrolyzed (such as succinyl-Leu-Tyr-|-NHMec, and Leu-Tyr-Leu-|-Tyr-Trp, in which cleavage of the -Tyr-|-Leu- and -Tyr-|-Trp bonds also occurs).. In terms of biological role, cleaves peptides in various proteins in a process that requires ATP hydrolysis. Has a chymotrypsin-like activity. Plays a major role in the degradation of misfolded proteins. The polypeptide is ATP-dependent Clp protease proteolytic subunit (Streptococcus agalactiae serotype III (strain NEM316)).